The sequence spans 782 residues: MTHEEHHAAKTLGIGKAIAVLTSGGDAQGMNAAVRAVVRVGIFTGARVFFVHEGYQGLVDGGDHIREATWESVSMMLQLGGTVIGSARCKDFREREGRLRAAHNLVKRGITNLCVIGGDGSLTGADTFRSEWSDLLSDLQKAGKITAEEATKSSYLNIVGLVGSIDNDFCGTDMTIGTDSALHRIIEIVDAITTTAQSHQRTFVLEVMGRHCGYLALVTSLSCGADWVFIPECPPDDDWEEHLCRRLSETRTRGSRLNIIIVAEGAIDKNGKPITSEEIKELVVKRLGYDTRVTVLGHVQRGGTPSAFDRILGSRMGVEAVMALLEGTPDTPACVVSLSGNQAVRLPLMECVQVTKDVTKAMNDRKFDEAMKLRGRSFMNNWEVYKLLAHIRPPVSKTSATMHTVAVMNVGAPAAGMNAAVRSTVRIGLIQGNRVLVVHDGFEGLAKGQIEEAGWSYVGGWTGQGGSKLGTKRTLPKKSFEQISANITKFNIQGLIIIGGFEAYTGGLELMEGRKQFDELCIPFVVIPATVSNNVPGSDFSVGADTALNTICTTCDRIKQSAAGTKRRVFIIETMGGYCGYLATMAGLAAGADAAYIFEEPFTIRDLQANVEHLVQKMKTTVKRGLVLRNEKCNENYTTDFIFNLYSEEGKGIFDSRKNVLGHMQQGGSPTPFDRNFATKMGAKAMNWMSGKIKESYRNGRIFANTPDSGCVLGMRKRALVFQPVTELKDQTDFDHRIPKEQWWLKLRPILKILAKYEIDLDTTEHAHLEHISRKRSGETSI.

Thr2 carries the post-translational modification N-acetylthreonine. Residues 2–390 are N-terminal catalytic PFK domain 1; that stretch reads THEEHHAAKT…NWEVYKLLAH (389 aa). ATP is bound by residues Gly25, 88-89, and 118-121; these read RC and GDGS. Position 119 (Asp119) interacts with Mg(2+). Position 133 is a phosphoserine (Ser133). Residues 164-166, Arg201, 208-210, Glu264, Arg292, and 298-301 contribute to the substrate site; these read SID, MGR, and HVQR. Asp166 functions as the Proton acceptor in the catalytic mechanism. Ser377 is modified (phosphoserine). The interval 391–403 is interdomain linker; it reads IRPPVSKTSATMH. Residues 404–782 form a C-terminal regulatory PFK domain 2 region; the sequence is TVAVMNVGAP…SRKRSGETSI (379 aa). Beta-D-fructose 2,6-bisphosphate contacts are provided by residues Arg473 and 530–534; that span reads TVSNN. Ser532 carries an O-linked (GlcNAc) serine glycan. An N6-(2-hydroxyisobutyryl)lysine modification is found at Lys559. Residues Arg568, 575-577, Glu631, Arg657, and 663-666 each bind beta-D-fructose 2,6-bisphosphate; these read MGG and HMQQ. Residue Ser669 is modified to Phosphoserine. Arg737 contacts beta-D-fructose 2,6-bisphosphate. The residue at position 777 (Ser777) is a Phosphoserine.

Belongs to the phosphofructokinase type A (PFKA) family. ATP-dependent PFK group I subfamily. Eukaryotic two domain clade 'E' sub-subfamily. In terms of assembly, homo- and heterotetramers. Phosphofructokinase (PFK) enzyme functions as a tetramer composed of different combinations of 3 types of subunits, called PFKM (M), PFKL (L) and PFKP (P). The composition of the PFK tetramer differs according to the tissue type it is present in. The kinetic and regulatory properties of the tetrameric enzyme are dependent on the subunit composition, hence can vary across tissues. Interacts (via C-terminus) with HK1 (via N-terminal spermatogenic cell-specific region). Mg(2+) is required as a cofactor. GlcNAcylation decreases enzyme activity.

The protein resides in the cytoplasm. The catalysed reaction is beta-D-fructose 6-phosphate + ATP = beta-D-fructose 1,6-bisphosphate + ADP + H(+). It participates in carbohydrate degradation; glycolysis; D-glyceraldehyde 3-phosphate and glycerone phosphate from D-glucose: step 3/4. Its activity is regulated as follows. Allosterically activated by ADP, AMP, or fructose 2,6-bisphosphate, and allosterically inhibited by ATP or citrate. Functionally, catalyzes the phosphorylation of D-fructose 6-phosphate to fructose 1,6-bisphosphate by ATP, the first committing step of glycolysis. In Canis lupus familiaris (Dog), this protein is ATP-dependent 6-phosphofructokinase, muscle type (PFKM).